The following is a 582-amino-acid chain: MSNLVKIGIRPTIDGRRLGVRESLEEQTMNMAKNLANFIAENVRHVSGDAVECVIADSTIGGVAEAAACADKFKRENVGLSITVTPCWCYGTETIDMDPHMPKAIWGFNGTERPGAVYLAAAMAGHSQVGLPAFSIYGEEVQDKDDTSIPSDVQEKILRFCRAGLTVATIRGKSYLSMGSVSMGIAGSIVDQPFFQHYLGMRNEYVDMTEIKRRLDREIFDKEEFELAMAWTKEHCHEGKDYNREPMSEARKQEDWQTVVKMTMIMRDLMEGNPKLAEMGFGEEALGHNAVVGGFQGQRHWTDHLPNGDFSEAILNSSFDWNGIREPFVIATENDSLNGVNMLFGKMLTGQAQVFCDVRTYWSADSVERVSGYRPESGFIHLVNSGSAALDGCGEAKLTSGESAIKPHWQMSAQDAEACLSATKWPPADVEYFRGGGFSSNFLTHGGMPFTMHRINIIKGIGPVLQIAEGHSITLPQEVHETLNERTNPTWPTTWFVPRLNDEGAFKDVYSVMANWGANHCVITYGHVGADLITLASMLRIPVAMHNVEESDVFRPHTWSAFGQDKEGQDYRACATFGPLYK.

Catalysis depends on proton acceptor residues glutamate 333 and aspartate 357. The Mn(2+) site is built by glutamate 333, aspartate 357, and histidine 520.

Belongs to the L-fucose isomerase family. Mn(2+) serves as cofactor.

Its subcellular location is the cytoplasm. It catalyses the reaction L-fucose = L-fuculose. It participates in carbohydrate degradation; L-fucose degradation; L-lactaldehyde and glycerone phosphate from L-fucose: step 1/3. Converts the aldose L-fucose into the corresponding ketose L-fuculose. This is L-fucose isomerase from Vibrio vulnificus (strain YJ016).